We begin with the raw amino-acid sequence, 331 residues long: Putative mitochondrial 2-oxoglutarate/malate carrier protein (331 aa).

Solcar repeat units lie at residues 39-128 (VRAA…FMSR), 140-231 (VGFK…AKAQ), and 239-329 (SSKV…LGWL). 6 helical membrane passes run 42–62 (ALPFINGGLSGMVATTVIQPI), 103–121 (GLSAGLLRQAVYTTARIGC), 148–168 (AGLAAGGLAAMIGNPADLALI), 199–219 (GVAALWAGAAPTVVRAMALNF), 245–265 (LSASAIAGFFASFFSLPFDFV), and 309–329 (YVRIAPHAMVTLLVADYLGWL).

It belongs to the mitochondrial carrier (TC 2.A.29) family.

It is found in the mitochondrion inner membrane. In terms of biological role, catalyzes the transport of 2-oxoglutarate across the inner mitochondrial membrane. This is Putative mitochondrial 2-oxoglutarate/malate carrier protein (mic-33) from Neurospora crassa (strain ATCC 24698 / 74-OR23-1A / CBS 708.71 / DSM 1257 / FGSC 987).